The primary structure comprises 85 residues: Platelet factor 4 (85 aa).

2 disulfides stabilise this stretch: C25-C51 and C27-C67. At S41 the chain carries Phosphoserine. 76–82 (KKIIKRL) is a binding site for heparin.

It belongs to the intercrine alpha (chemokine CxC) family. In terms of assembly, homotetramer. Interacts with TNFAIP6 (via Link domain). Interacts with CCR1. Interacts with CXCR3. Interacts with THBD; this interaction enhances generation of activated protein C.

It is found in the secreted. Chemokine released during platelet aggregation that plays a role in different biological processes including hematopoiesis, cell proliferation, differentiation, and activation. Acts via different functional receptors including CCR1, CXCR3A or CXCR3B. Upon interaction with CXCR3A receptor, induces activated T-lymphocytes migration mediated via downstream Ras/extracellular signal-regulated kinase (ERK) signaling. Neutralizes the anticoagulant effect of heparin by binding more strongly to heparin than to the chondroitin-4-sulfate chains of the carrier molecule. Plays a role in the inhibition of hematopoiesis and in the maintenance of hematopoietic stem cell (HSC) quiescence. Chemotactic for neutrophils and monocytes via CCR1. Inhibits endothelial cell proliferation. In cooperation with toll-like receptor 8/TLR8, induces chromatin remodeling and activates inflammatory gene expression via the TBK1-IRF5 axis. In addition, induces myofibroblast differentiation and collagen synthesis in different precursor cells, including endothelial cells, by stimulating endothelial-to-mesenchymal transition. Interacts with thrombomodulin/THBD to enhance the activation of protein C and thus potentiates its anticoagulant activity. The polypeptide is Platelet factor 4 (PF4) (Ovis aries (Sheep)).